Consider the following 290-residue polypeptide: Ribonuclease HIII (290 aa).

The RNase H type-2 domain maps to 78 to 290 (LPLIGTDEVG…FKNTEKAKNA (213 aa)). 3 residues coordinate a divalent metal cation: aspartate 84, glutamate 85, and aspartate 187.

The protein belongs to the RNase HII family. RnhC subfamily. Mn(2+) serves as cofactor. Requires Mg(2+) as cofactor.

The protein localises to the cytoplasm. It catalyses the reaction Endonucleolytic cleavage to 5'-phosphomonoester.. Its function is as follows. Endonuclease that specifically degrades the RNA of RNA-DNA hybrids. The chain is Ribonuclease HIII from Streptococcus pneumoniae (strain CGSP14).